The chain runs to 162 residues: ATP synthase subunit b 1 (162 aa).

A helical transmembrane segment spans residues 1–21 (MLLTAEFWVAVAFVAFLVIVW).

This sequence belongs to the ATPase B chain family. In terms of assembly, F-type ATPases have 2 components, F(1) - the catalytic core - and F(0) - the membrane proton channel. F(1) has five subunits: alpha(3), beta(3), gamma(1), delta(1), epsilon(1). F(0) has three main subunits: a(1), b(2) and c(10-14). The alpha and beta chains form an alternating ring which encloses part of the gamma chain. F(1) is attached to F(0) by a central stalk formed by the gamma and epsilon chains, while a peripheral stalk is formed by the delta and b chains.

Its subcellular location is the cell inner membrane. Its function is as follows. F(1)F(0) ATP synthase produces ATP from ADP in the presence of a proton or sodium gradient. F-type ATPases consist of two structural domains, F(1) containing the extramembraneous catalytic core and F(0) containing the membrane proton channel, linked together by a central stalk and a peripheral stalk. During catalysis, ATP synthesis in the catalytic domain of F(1) is coupled via a rotary mechanism of the central stalk subunits to proton translocation. Component of the F(0) channel, it forms part of the peripheral stalk, linking F(1) to F(0). The sequence is that of ATP synthase subunit b 1 from Methylorubrum extorquens (strain PA1) (Methylobacterium extorquens).